We begin with the raw amino-acid sequence, 457 residues long: tRNA modification GTPase MnmE (457 aa).

The (6S)-5-formyl-5,6,7,8-tetrahydrofolate site is built by arginine 25, glutamate 87, and arginine 126. Positions 223 to 377 constitute a TrmE-type G domain; the sequence is GIATAIIGRP…IEEKINQLFF (155 aa). Asparagine 233 provides a ligand contact to K(+). GTP contacts are provided by residues 233–238, 252–258, and 277–280; these read NVGKSS, TDIAGTT, and DTAG. Serine 237 lines the Mg(2+) pocket. K(+) contacts are provided by threonine 252, isoleucine 254, and threonine 257. Threonine 258 contributes to the Mg(2+) binding site. Lysine 457 serves as a coordination point for (6S)-5-formyl-5,6,7,8-tetrahydrofolate.

Belongs to the TRAFAC class TrmE-Era-EngA-EngB-Septin-like GTPase superfamily. TrmE GTPase family. In terms of assembly, homodimer. Heterotetramer of two MnmE and two MnmG subunits. K(+) serves as cofactor.

It is found in the cytoplasm. Exhibits a very high intrinsic GTPase hydrolysis rate. Involved in the addition of a carboxymethylaminomethyl (cmnm) group at the wobble position (U34) of certain tRNAs, forming tRNA-cmnm(5)s(2)U34. The polypeptide is tRNA modification GTPase MnmE (Streptococcus suis (strain 98HAH33)).